The following is a 304-amino-acid chain: Protoheme IX farnesyltransferase (304 aa).

The next 9 helical transmembrane spans lie at 31–51 (VNTL…PDGL), 58–78 (VAAT…NCLI), 99–119 (LAPA…LTVL), 126–146 (LTMW…TVLL), 154–174 (IVIG…AVTG), 180–200 (ALLL…ALAL), 222–242 (FTRL…LLPF), 243–263 (ATRM…IGFL), and 284–304 (FSIL…YLPL).

It belongs to the UbiA prenyltransferase family. Protoheme IX farnesyltransferase subfamily.

It is found in the cell inner membrane. It carries out the reaction heme b + (2E,6E)-farnesyl diphosphate + H2O = Fe(II)-heme o + diphosphate. The protein operates within porphyrin-containing compound metabolism; heme O biosynthesis; heme O from protoheme: step 1/1. Converts heme B (protoheme IX) to heme O by substitution of the vinyl group on carbon 2 of heme B porphyrin ring with a hydroxyethyl farnesyl side group. This chain is Protoheme IX farnesyltransferase, found in Aromatoleum aromaticum (strain DSM 19018 / LMG 30748 / EbN1) (Azoarcus sp. (strain EbN1)).